The primary structure comprises 429 residues: Enolase (429 aa).

Gln-163 contacts (2R)-2-phosphoglycerate. Glu-205 acts as the Proton donor in catalysis. Mg(2+) is bound by residues Asp-242, Glu-286, and Asp-313. 4 residues coordinate (2R)-2-phosphoglycerate: Lys-338, Arg-367, Ser-368, and Lys-389. Residue Lys-338 is the Proton acceptor of the active site.

This sequence belongs to the enolase family. Requires Mg(2+) as cofactor.

The protein localises to the cytoplasm. It is found in the secreted. It localises to the cell surface. It carries out the reaction (2R)-2-phosphoglycerate = phosphoenolpyruvate + H2O. It participates in carbohydrate degradation; glycolysis; pyruvate from D-glyceraldehyde 3-phosphate: step 4/5. In terms of biological role, catalyzes the reversible conversion of 2-phosphoglycerate (2-PG) into phosphoenolpyruvate (PEP). It is essential for the degradation of carbohydrates via glycolysis. The sequence is that of Enolase from Geotalea uraniireducens (strain Rf4) (Geobacter uraniireducens).